Consider the following 221-residue polypeptide: GTP cyclohydrolase 1 (221 aa).

C109, H112, and C180 together coordinate Zn(2+).

This sequence belongs to the GTP cyclohydrolase I family. Toroid-shaped homodecamer, composed of two pentamers of five dimers.

It catalyses the reaction GTP + H2O = 7,8-dihydroneopterin 3'-triphosphate + formate + H(+). Its pathway is cofactor biosynthesis; 7,8-dihydroneopterin triphosphate biosynthesis; 7,8-dihydroneopterin triphosphate from GTP: step 1/1. This chain is GTP cyclohydrolase 1, found in Blochmanniella pennsylvanica (strain BPEN).